We begin with the raw amino-acid sequence, 354 residues long: Guanine nucleotide-binding protein G(t) subunit alpha-3 (354 aa).

The disordered stretch occupies residues 1–27 (MGSGISSESKESAKRSKELEKKLQEDA). Gly-2 carries the N-myristoyl glycine lipid modification. Residues 8-27 (ESKESAKRSKELEKKLQEDA) are compositionally biased toward basic and acidic residues. One can recognise a G-alpha domain in the interval 32-354 (RTVKLLLLGA…KENLKDCGLF (323 aa)). The tract at residues 35–48 (KLLLLGAGESGKST) is G1 motif. GTP is bound by residues 40-47 (GAGESGKS), 175-181 (LHSRVKT), 200-204 (DVGGQ), 269-272 (NKKD), and Ala-326. Mg(2+) is bound by residues Ser-47 and Thr-181. Positions 173-181 (DVLHSRVKT) are G2 motif. The tract at residues 196–205 (FRMFDVGGQR) is G3 motif. Positions 265–272 (VLFLNKKD) are G4 motif. A G5 motif region spans residues 324–329 (TCATDT).

Belongs to the G-alpha family. G(i/o/t/z) subfamily. In terms of assembly, g proteins are composed of 3 units; alpha, beta and gamma, respectively GNAT3, GNB1 and GNG13 for Gustducin heterotrimer for bitter taste transduction. The alpha chain contains the guanine nucleotide binding site. Component of the TAS2R14-GNAT3 complex, consisting of TAS2R14, GNAT3, GNB1 and GNG2; within the complex interacts with TAS2R14; this complex plays a role in the perception of bitterness. Gustducin heterotrimer may also be composed of GNAT3, GNB3 and GNG13. Potential N-myristoylation may anchor alpha-subunit to the inner surface of plasma membrane. Expressed in taste buds (sensory organs of clustered epithelial cells) of the circumvallate and foliate papillae of the tongue at protein level. Expressed in enteroendocrine L cells of the gut. Detected also in spermatozoa.

The protein resides in the cytoplasm. In terms of biological role, guanine nucleotide-binding protein (G protein) alpha subunit playing a prominent role in bitter and sweet taste transduction as well as in umami (monosodium glutamate, monopotassium glutamate, and inosine monophosphate) taste transduction. Transduction by this alpha subunit involves coupling of specific cell-surface receptors with a cGMP-phosphodiesterase; Activation of phosphodiesterase lowers intracellular levels of cAMP and cGMP which may open a cyclic nucleotide-suppressible cation channel leading to influx of calcium, ultimately leading to release of neurotransmitter. Indeed, denatonium and strychnine induce transient reduction in cAMP and cGMP in taste tissue, whereas this decrease is inhibited by GNAT3 antibody. Gustducin heterotrimer transduces response to bitter and sweet compounds via regulation of phosphodiesterase for alpha subunit, as well as via activation of phospholipase C for beta and gamma subunits, with ultimate increase inositol trisphosphate and increase of intracellular Calcium. GNAT3 can functionally couple to taste receptors to transmit intracellular signal: receptor heterodimer TAS1R2/TAS1R3 senses sweetness and TAS1R1/TAS1R3 transduces umami taste, whereas the T2R family GPCRs such as TAS2R14 act as bitter sensors. Also functions as lumenal sugar sensors in the gut to control the expression of the Na+-glucose transporter SGLT1 in response to dietaty sugar, as well as the secretion of Glucagon-like peptide-1, GLP-1 and glucose-dependent insulinotropic polypeptide, GIP. Thus, may modulate the gut capacity to absorb sugars, with implications in malabsorption syndromes and diet-related disorders including diabetes and obesity. The sequence is that of Guanine nucleotide-binding protein G(t) subunit alpha-3 (GNAT3) from Homo sapiens (Human).